Consider the following 510-residue polypeptide: ATP synthase subunit alpha (510 aa).

Position 169-176 (169-176 (GDRQTGKT)) interacts with ATP.

The protein belongs to the ATPase alpha/beta chains family. F-type ATPases have 2 components, CF(1) - the catalytic core - and CF(0) - the membrane proton channel. CF(1) has five subunits: alpha(3), beta(3), gamma(1), delta(1), epsilon(1). CF(0) has three main subunits: a(1), b(2) and c(9-12). The alpha and beta chains form an alternating ring which encloses part of the gamma chain. CF(1) is attached to CF(0) by a central stalk formed by the gamma and epsilon chains, while a peripheral stalk is formed by the delta and b chains.

Its subcellular location is the cell membrane. The catalysed reaction is ATP + H2O + 4 H(+)(in) = ADP + phosphate + 5 H(+)(out). Produces ATP from ADP in the presence of a proton gradient across the membrane. The alpha chain is a regulatory subunit. The chain is ATP synthase subunit alpha from Buchnera aphidicola subsp. Schizaphis graminum (strain Sg).